Consider the following 632-residue polypeptide: Bifunctional protein GlmU (632 aa).

The interval 1–229 is pyrophosphorylase; the sequence is MAERELSVAI…PQEIVGVNDR (229 aa). Residues 11 to 14, K25, Q76, and 81 to 82 each bind UDP-N-acetyl-alpha-D-glucosamine; these read LAAG and GT. Residue D106 participates in Mg(2+) binding. Residues G143, E158, N173, and N227 each contribute to the UDP-N-acetyl-alpha-D-glucosamine site. Residue N227 coordinates Mg(2+). The interval 230-250 is linker; it reads RQLAQAYQILQDRLKEAWMEA. An N-acetyltransferase region spans residues 251 to 632; that stretch reads GVTFVDPDSS…ADNSRPKSLQ (382 aa). Residues R332 and K350 each contribute to the UDP-N-acetyl-alpha-D-glucosamine site. H362 (proton acceptor) is an active-site residue. Residues Y365 and N376 each coordinate UDP-N-acetyl-alpha-D-glucosamine. Residues A379, 385–386, A422, and R441 each bind acetyl-CoA; that span reads NY. Residues 600–632 are disordered; that stretch reads VAGDPCWPSPPPQPQQNQQTKPEADNSRPKSLQ. Positions 621-632 are enriched in basic and acidic residues; it reads PEADNSRPKSLQ.

The protein in the N-terminal section; belongs to the N-acetylglucosamine-1-phosphate uridyltransferase family. It in the C-terminal section; belongs to the transferase hexapeptide repeat family. Homotrimer. The cofactor is Mg(2+).

Its subcellular location is the cytoplasm. It carries out the reaction alpha-D-glucosamine 1-phosphate + acetyl-CoA = N-acetyl-alpha-D-glucosamine 1-phosphate + CoA + H(+). It catalyses the reaction N-acetyl-alpha-D-glucosamine 1-phosphate + UTP + H(+) = UDP-N-acetyl-alpha-D-glucosamine + diphosphate. Its pathway is nucleotide-sugar biosynthesis; UDP-N-acetyl-alpha-D-glucosamine biosynthesis; N-acetyl-alpha-D-glucosamine 1-phosphate from alpha-D-glucosamine 6-phosphate (route II): step 2/2. It functions in the pathway nucleotide-sugar biosynthesis; UDP-N-acetyl-alpha-D-glucosamine biosynthesis; UDP-N-acetyl-alpha-D-glucosamine from N-acetyl-alpha-D-glucosamine 1-phosphate: step 1/1. The protein operates within bacterial outer membrane biogenesis; LPS lipid A biosynthesis. Its function is as follows. Catalyzes the last two sequential reactions in the de novo biosynthetic pathway for UDP-N-acetylglucosamine (UDP-GlcNAc). The C-terminal domain catalyzes the transfer of acetyl group from acetyl coenzyme A to glucosamine-1-phosphate (GlcN-1-P) to produce N-acetylglucosamine-1-phosphate (GlcNAc-1-P), which is converted into UDP-GlcNAc by the transfer of uridine 5-monophosphate (from uridine 5-triphosphate), a reaction catalyzed by the N-terminal domain. The protein is Bifunctional protein GlmU of Synechococcus sp. (strain JA-2-3B'a(2-13)) (Cyanobacteria bacterium Yellowstone B-Prime).